A 503-amino-acid chain; its full sequence is SWI/SNF and RSC complexes subunit ssr2 (503 aa).

An SWIRM domain is found at 18–115 (IIVPSYAGWF…YQIDPETRPA (98 aa)). Phosphoserine is present on serine 175. Residues 188 to 242 (RVDKVCFTCGVNCSQTWYHNLKNKKYDICPNCYKQGRFSSSFNSSDFLCMDAIDF) form a ZZ-type; degenerate zinc finger. Zn(2+)-binding residues include cysteine 193, cysteine 196, cysteine 216, and cysteine 219. The SANT domain maps to 245–296 (DEEKPWSNQETLLLLEAIETYGDDWNQIALHVGSRTKEQCLIHFLQIPIEDP). Serine 306 carries the post-translational modification Phosphoserine.

Belongs to the SMARCC family. In terms of assembly, component of the RSC complex composed of at least arp9, arp42, rsc1, rsc4, rsc7, rsc9, rsc58, sfh1, snf21, ssr1, ssr2, ssr3 and ssr4. The complex interacts with histone and histone variant components of centromeric chromatin. Component of the SWI/SNF global transcription activator complex composed of at least arp9, arp42, snf5, snf22, snf30, sbf59, sol1, ssr1, ssr2, ssr3, ssr4 and tfg3.

Its subcellular location is the cytoplasm. The protein localises to the nucleus. Component of the chromatin structure remodeling complex (RSC), which is involved in transcription regulation and nucleosome positioning. Controls particularly membrane and organelle development genes. Part of the SWI/SNF complex, an ATP-dependent chromatin remodeling complex, required for the positive and negative regulation of gene expression of a large number of genes. It changes chromatin structure by altering DNA-histone contacts within a nucleosome, leading eventually to a change in nucleosome position, thus facilitating or repressing binding of gene-specific transcription factors. The polypeptide is SWI/SNF and RSC complexes subunit ssr2 (ssr2) (Schizosaccharomyces pombe (strain 972 / ATCC 24843) (Fission yeast)).